Reading from the N-terminus, the 308-residue chain is Tetraacyldisaccharide 4'-kinase (308 aa).

Residue 63–70 (SFGGNGKT) coordinates ATP.

The protein belongs to the LpxK family.

The catalysed reaction is a lipid A disaccharide + ATP = a lipid IVA + ADP + H(+). The protein operates within glycolipid biosynthesis; lipid IV(A) biosynthesis; lipid IV(A) from (3R)-3-hydroxytetradecanoyl-[acyl-carrier-protein] and UDP-N-acetyl-alpha-D-glucosamine: step 6/6. In terms of biological role, transfers the gamma-phosphate of ATP to the 4'-position of a tetraacyldisaccharide 1-phosphate intermediate (termed DS-1-P) to form tetraacyldisaccharide 1,4'-bis-phosphate (lipid IVA). The protein is Tetraacyldisaccharide 4'-kinase of Campylobacter jejuni subsp. doylei (strain ATCC BAA-1458 / RM4099 / 269.97).